Here is a 385-residue protein sequence, read N- to C-terminus: GTP cyclohydrolase-2 (385 aa).

The DHBP synthase-like stretch occupies residues 1-189 (MYADAPSDSA…RDIADYRVHV (189 aa)). The segment at 190–385 (VRTLRRVAEA…TKAERSGHMF (196 aa)) is GTP cyclohydrolase II. Position 240–244 (240–244 (RLHSE)) interacts with GTP. Zn(2+)-binding residues include Cys245, Cys256, and Cys258. Residues Gln261, 283 to 285 (EGR), and Thr305 contribute to the GTP site. Asp317 serves as the catalytic Proton acceptor. Arg319 (nucleophile) is an active-site residue. Residues Thr340 and Lys345 each contribute to the GTP site.

This sequence in the N-terminal section; belongs to the DHBP synthase family. It in the C-terminal section; belongs to the GTP cyclohydrolase II family. The cofactor is Zn(2+).

It catalyses the reaction GTP + 4 H2O = 2,5-diamino-6-hydroxy-4-(5-phosphoribosylamino)-pyrimidine + formate + 2 phosphate + 3 H(+). It participates in cofactor biosynthesis; riboflavin biosynthesis; 5-amino-6-(D-ribitylamino)uracil from GTP: step 1/4. In terms of biological role, catalyzes the conversion of GTP to 2,5-diamino-6-ribosylamino-4(3H)-pyrimidinone 5'-phosphate (DARP), formate and pyrophosphate. The protein is GTP cyclohydrolase-2 (ribA) of Azospirillum brasilense.